A 311-amino-acid polypeptide reads, in one-letter code: Methionyl-tRNA formyltransferase (311 aa).

112-115 is a binding site for (6S)-5,6,7,8-tetrahydrofolate; that stretch reads SLLP.

The protein belongs to the Fmt family.

It catalyses the reaction L-methionyl-tRNA(fMet) + (6R)-10-formyltetrahydrofolate = N-formyl-L-methionyl-tRNA(fMet) + (6S)-5,6,7,8-tetrahydrofolate + H(+). Attaches a formyl group to the free amino group of methionyl-tRNA(fMet). The formyl group appears to play a dual role in the initiator identity of N-formylmethionyl-tRNA by promoting its recognition by IF2 and preventing the misappropriation of this tRNA by the elongation apparatus. The chain is Methionyl-tRNA formyltransferase from Rhizobium meliloti (strain 1021) (Ensifer meliloti).